We begin with the raw amino-acid sequence, 130 residues long: Small ribosomal subunit protein uS8 (130 aa).

The protein belongs to the universal ribosomal protein uS8 family. As to quaternary structure, part of the 30S ribosomal subunit. Contacts proteins S5 and S12.

Functionally, one of the primary rRNA binding proteins, it binds directly to 16S rRNA central domain where it helps coordinate assembly of the platform of the 30S subunit. In Vibrio cholerae serotype O1 (strain ATCC 39541 / Classical Ogawa 395 / O395), this protein is Small ribosomal subunit protein uS8.